Here is a 386-residue protein sequence, read N- to C-terminus: Succinate--CoA ligase [ADP-forming] subunit beta (386 aa).

Residues Lys9 to Arg244 enclose the ATP-grasp domain. Residues Lys46, Gly53 to Gly55, Glu99, Thr102, and Glu107 each bind ATP. 2 residues coordinate Mg(2+): Asn199 and Asp213. Residues Asn264 and Gly321 to Val323 contribute to the substrate site.

Belongs to the succinate/malate CoA ligase beta subunit family. In terms of assembly, heterotetramer of two alpha and two beta subunits. Requires Mg(2+) as cofactor.

It catalyses the reaction succinate + ATP + CoA = succinyl-CoA + ADP + phosphate. It carries out the reaction GTP + succinate + CoA = succinyl-CoA + GDP + phosphate. The protein operates within carbohydrate metabolism; tricarboxylic acid cycle; succinate from succinyl-CoA (ligase route): step 1/1. In terms of biological role, succinyl-CoA synthetase functions in the citric acid cycle (TCA), coupling the hydrolysis of succinyl-CoA to the synthesis of either ATP or GTP and thus represents the only step of substrate-level phosphorylation in the TCA. The beta subunit provides nucleotide specificity of the enzyme and binds the substrate succinate, while the binding sites for coenzyme A and phosphate are found in the alpha subunit. The sequence is that of Succinate--CoA ligase [ADP-forming] subunit beta from Thioalkalivibrio sulfidiphilus (strain HL-EbGR7).